The primary structure comprises 95 residues: Aspartyl/glutamyl-tRNA(Asn/Gln) amidotransferase subunit C (95 aa).

This sequence belongs to the GatC family. As to quaternary structure, heterotrimer of A, B and C subunits.

It catalyses the reaction L-glutamyl-tRNA(Gln) + L-glutamine + ATP + H2O = L-glutaminyl-tRNA(Gln) + L-glutamate + ADP + phosphate + H(+). It carries out the reaction L-aspartyl-tRNA(Asn) + L-glutamine + ATP + H2O = L-asparaginyl-tRNA(Asn) + L-glutamate + ADP + phosphate + 2 H(+). Allows the formation of correctly charged Asn-tRNA(Asn) or Gln-tRNA(Gln) through the transamidation of misacylated Asp-tRNA(Asn) or Glu-tRNA(Gln) in organisms which lack either or both of asparaginyl-tRNA or glutaminyl-tRNA synthetases. The reaction takes place in the presence of glutamine and ATP through an activated phospho-Asp-tRNA(Asn) or phospho-Glu-tRNA(Gln). The polypeptide is Aspartyl/glutamyl-tRNA(Asn/Gln) amidotransferase subunit C (Prochlorococcus marinus (strain NATL2A)).